An 859-amino-acid polypeptide reads, in one-letter code: Low-density lipoprotein receptor-related protein 12 (859 aa).

The N-terminal stretch at 1–32 is a signal peptide; it reads MACRWSTKESPRWRSALLLLFLAGVYGNGALA. Topologically, residues 33–492 are extracellular; it reads EHSENVHISG…ENCPVIVPTR (460 aa). Cystine bridges form between Cys47-Cys76 and Cys103-Cys122. A CUB 1 domain is found at 47–159; it reads CGETPEQIRA…KGFRLAYFSG (113 aa). Asn75 carries N-linked (GlcNAc...) asparagine glycosylation. Asn146 carries N-linked (GlcNAc...) asparagine glycosylation. 2 consecutive LDL-receptor class A domains span residues 165 to 201 and 214 to 255; these read NCAC…EICA and PCAY…IDCD. Cystine bridges form between Cys166/Cys178, Cys173/Cys191, Cys185/Cys200, Cys215/Cys232, Cys222/Cys245, Cys239/Cys254, and Cys259/Cys285. The CUB 2 domain occupies 259-372; it reads CGQWLKYFYG…RGFNATYQVD (114 aa). N-linked (GlcNAc...) asparagine glycosylation is found at Asn284 and Asn366. LDL-receptor class A domains are found at residues 374–411, 412–449, and 450–486; these read FCLP…TNCT, MCQK…KNCF, and FCQP…ENCP. 9 cysteine pairs are disulfide-bonded: Cys375–Cys388, Cys382–Cys401, Cys395–Cys410, Cys413–Cys426, Cys420–Cys439, Cys433–Cys448, Cys451–Cys463, Cys458–Cys476, and Cys470–Cys485. Residue Asn409 is glycosylated (N-linked (GlcNAc...) asparagine). Asn441 is a glycosylation site (N-linked (GlcNAc...) asparagine). A helical transmembrane segment spans residues 493–513; that stretch reads VITAAVIGSLICGLLLVIALG. At 514-859 the chain is on the cytoplasmic side; it reads CTCKLYSLRM…TSDDEALLLC (346 aa). Disordered stretches follow at residues 623-678, 693-723, 748-770, and 801-823; these read ADGD…LPQK, ASSS…SPAR, SSLS…REDD, and DQGQ…SNRD. Composition is skewed to polar residues over residues 748-757 and 801-814; these read SSLSQNQSPL and DQGQ…NATN.

This sequence belongs to the LDLR family. As to quaternary structure, may interact with RACK1, ZFYVE9 and NMRK2. As to expression, widely expressed in heart, skeletal muscle, brain, lung, placenta and pancreas, but not in tissues consisting of a large number of epithelial cells, such as liver and kidney. Expressed at very low levels in a number of tumor-derived cell lines.

The protein resides in the membrane. The protein localises to the coated pit. In terms of biological role, probable receptor, which may be involved in the internalization of lipophilic molecules and/or signal transduction. May act as a tumor suppressor. This is Low-density lipoprotein receptor-related protein 12 (LRP12) from Homo sapiens (Human).